We begin with the raw amino-acid sequence, 361 residues long: mRNA export factor ICP27 homolog (361 aa).

A compositionally biased stretch (low complexity) spans 1–15 (MEDSGNSSGSEASRS). The interval 1–107 (MEDSGNSSGS…SESARAAVSA (107 aa)) is disordered. Residues 16 to 36 (GSEERRPVRERLGSRPPERRP) are compositionally biased toward basic and acidic residues. An RGG-box region spans residues 45-54 (RRRRGGRGGR). A compositionally biased stretch (basic and acidic residues) spans 80–99 (RQEADRPDGGPDAPPDRLSE). Residues Cys-253, His-328, Cys-332, and Cys-337 each coordinate Zn(2+). Residues 253 to 337 (CYLRDTPVDE…HKTGCDAPTC (85 aa)) form a CHC2-type zinc finger.

Belongs to the HHV-1 ICP27 protein family. In terms of assembly, homodimer. Homodimerization is required for transactivation. Associates in a complex with RNA, and host export factors NXF1/TAP and ALYREF; these interactions allow nuclear export of viral transcripts. Interacts with three host shuttling SR proteins SRSF1, SRSF3 and SRSF7. Interacts with host SRPK1. Interacts with IE62; this interaction enhances IE62 transactivation.

It localises to the host cytoplasm. The protein resides in the host nucleus. In terms of biological role, multifunctional regulator of the expression of viral genes that mediates nuclear export of viral intronless mRNAs. This immediate early (EI) protein promotes the nuclear export of viral intronless mRNAs by interacting with mRNAs and host NXF1/TAP. This is mRNA export factor ICP27 homolog from Suid herpesvirus 1 (strain Kaplan) (SuHV-1).